The chain runs to 201 residues: Recombination protein RecR (201 aa).

The C4-type zinc-finger motif lies at 57-72 (CCDCRTFTEEERCTIC). Positions 81–176 (GQICVVESPA…AASRIAHGVP (96 aa)) constitute a Toprim domain.

Belongs to the RecR family.

May play a role in DNA repair. It seems to be involved in an RecBC-independent recombinational process of DNA repair. It may act with RecF and RecO. This Proteus mirabilis (strain HI4320) protein is Recombination protein RecR.